The chain runs to 458 residues: Serine--tRNA ligase (458 aa).

252 to 254 (TAE) provides a ligand contact to L-serine. ATP is bound by residues 283–285 (RKE) and Val299. An L-serine-binding site is contributed by Glu306. Position 370–373 (370–373 (EMVS)) interacts with ATP. L-serine is bound at residue Thr405.

The protein belongs to the class-II aminoacyl-tRNA synthetase family. Type-1 seryl-tRNA synthetase subfamily. In terms of assembly, homodimer. The tRNA molecule binds across the dimer.

The protein resides in the cytoplasm. It carries out the reaction tRNA(Ser) + L-serine + ATP = L-seryl-tRNA(Ser) + AMP + diphosphate + H(+). It catalyses the reaction tRNA(Sec) + L-serine + ATP = L-seryl-tRNA(Sec) + AMP + diphosphate + H(+). The protein operates within aminoacyl-tRNA biosynthesis; selenocysteinyl-tRNA(Sec) biosynthesis; L-seryl-tRNA(Sec) from L-serine and tRNA(Sec): step 1/1. Its function is as follows. Catalyzes the attachment of serine to tRNA(Ser). Is also able to aminoacylate tRNA(Sec) with serine, to form the misacylated tRNA L-seryl-tRNA(Sec), which will be further converted into selenocysteinyl-tRNA(Sec). In Sulfolobus acidocaldarius (strain ATCC 33909 / DSM 639 / JCM 8929 / NBRC 15157 / NCIMB 11770), this protein is Serine--tRNA ligase.